Reading from the N-terminus, the 205-residue chain is MFELQPSSIVVLVFCVLAIKVCISLIGKTTIQDRIWYLYTIGASKAGHSKFVALAQKREELVRVNKERRAISAQDEYAKWTKLNRQFDKLNSEVNDLAEATSSEKAQISKLVNLAIAATTTAPIWFSRIWYRKVVLFYLPPKVFPYYIEWVLALPFIVTGGVGLTVWMFALNSVLSSLEFLIKFYLEEPVKKPEAPAASEAQTKQ.

Topologically, residues Met-1–Ile-9 are lumenal. Residues Val-10–Thr-29 traverse the membrane as a helical segment. At Thr-30–Ile-116 the chain is on the cytoplasmic side. The stretch at Ala-53–Ser-103 forms a coiled coil. The helical transmembrane segment at Ala-117–Phe-137 threads the bilayer. The Lumenal segment spans residues Tyr-138–Gly-161. Residues Val-162–Leu-178 form a helical membrane-spanning segment. Topologically, residues Glu-179–Gln-205 are cytoplasmic.

The protein belongs to the WRB/GET1 family. As to quaternary structure, component of the Golgi to ER traffic (GET) complex, which is composed of GET1, GET2 and GET3. Within the complex, GET1 and GET2 form a heterotetramer which is stabilized by phosphatidylinositol binding and which binds to the GET3 homodimer.

Its subcellular location is the endoplasmic reticulum membrane. The protein localises to the golgi apparatus membrane. Functionally, required for the post-translational delivery of tail-anchored (TA) proteins to the endoplasmic reticulum. Together with GET2, acts as a membrane receptor for soluble GET3, which recognizes and selectively binds the transmembrane domain of TA proteins in the cytosol. The GET complex cooperates with the HDEL receptor ERD2 to mediate the ATP-dependent retrieval of resident ER proteins that contain a C-terminal H-D-E-L retention signal from the Golgi to the ER. The chain is Golgi to ER traffic protein 1 from Clavispora lusitaniae (strain ATCC 42720) (Yeast).